Here is a 67-residue protein sequence, read N- to C-terminus: Protein C' (67 aa).

It belongs to the rhabdoviruses C protein family.

Functionally, seems to stimulates transcription by the viral polymerase. May play a role in viral pathogenesis or transmission by insects vectors. The protein is Protein C' (P) of Vesicular stomatitis Indiana virus (strain 85CLB South America) (VSIV).